Reading from the N-terminus, the 237-residue chain is Ribonuclease PH (237 aa).

Phosphate-binding positions include Arg86 and 124–126; that span reads GTR.

The protein belongs to the RNase PH family. Homohexameric ring arranged as a trimer of dimers.

The enzyme catalyses tRNA(n+1) + phosphate = tRNA(n) + a ribonucleoside 5'-diphosphate. Functionally, phosphorolytic 3'-5' exoribonuclease that plays an important role in tRNA 3'-end maturation. Removes nucleotide residues following the 3'-CCA terminus of tRNAs; can also add nucleotides to the ends of RNA molecules by using nucleoside diphosphates as substrates, but this may not be physiologically important. Probably plays a role in initiation of 16S rRNA degradation (leading to ribosome degradation) during starvation. The polypeptide is Ribonuclease PH (Bradyrhizobium sp. (strain BTAi1 / ATCC BAA-1182)).